Reading from the N-terminus, the 424-residue chain is L-glutamine:scyllo-inosose aminotransferase (424 aa).

Residues 1–21 (MDSSLAISGGPRLSNREWPRW) are disordered. K202 bears the N6-(pyridoxal phosphate)lysine mark.

Belongs to the DegT/DnrJ/EryC1 family. L-glutamine:2-deoxy-scyllo-inosose/scyllo-inosose aminotransferase subfamily. Homodimer. The cofactor is pyridoxal 5'-phosphate.

It carries out the reaction scyllo-inosose + L-glutamine = 1-amino-1-deoxy-scyllo-inositol + 2-oxoglutaramate. The protein operates within antibiotic biosynthesis; streptomycin biosynthesis. Functionally, catalyzes the PLP-dependent transamination of scyllo-inosose to form scyllo-inosamine. The chain is L-glutamine:scyllo-inosose aminotransferase (stsC) from Streptomyces griseus.